The following is a 172-amino-acid chain: Transcription factor E (172 aa).

The region spanning 8–90 (DDPVVQKYLH…LWTFQYENVP (83 aa)) is the HTH TFE/IIEalpha-type domain.

This sequence belongs to the TFE family. Monomer. Interaction with RNA polymerase subunits RpoF and RpoE is necessary for Tfe stimulatory transcription activity. Able to interact with Tbp and RNA polymerase in the absence of DNA promoter. Interacts both with the preinitiation and elongation complexes.

Its function is as follows. Transcription factor that plays a role in the activation of archaeal genes transcribed by RNA polymerase. Facilitates transcription initiation by enhancing TATA-box recognition by TATA-box-binding protein (Tbp), and transcription factor B (Tfb) and RNA polymerase recruitment. Not absolutely required for transcription in vitro, but particularly important in cases where Tbp or Tfb function is not optimal. It dynamically alters the nucleic acid-binding properties of RNA polymerases by stabilizing the initiation complex and destabilizing elongation complexes. Seems to translocate with the RNA polymerase following initiation and acts by binding to the non template strand of the transcription bubble in elongation complexes. This is Transcription factor E from Halobacterium salinarum (strain ATCC 700922 / JCM 11081 / NRC-1) (Halobacterium halobium).